The sequence spans 675 residues: Methionine--tRNA ligase (675 aa).

The 'HIGH' region signature appears at 15-25 (PYANGPIHLGH). Zn(2+) is bound by residues C146, C149, C159, and C162. Residues 332–336 (KMSKS) carry the 'KMSKS' region motif. K335 provides a ligand contact to ATP. One can recognise a tRNA-binding domain in the interval 573 to 675 (DFAKVDMRVA…SGAQPGMQVK (103 aa)).

Belongs to the class-I aminoacyl-tRNA synthetase family. MetG type 1 subfamily. As to quaternary structure, homodimer. Requires Zn(2+) as cofactor.

It is found in the cytoplasm. It carries out the reaction tRNA(Met) + L-methionine + ATP = L-methionyl-tRNA(Met) + AMP + diphosphate. Functionally, is required not only for elongation of protein synthesis but also for the initiation of all mRNA translation through initiator tRNA(fMet) aminoacylation. In Photorhabdus laumondii subsp. laumondii (strain DSM 15139 / CIP 105565 / TT01) (Photorhabdus luminescens subsp. laumondii), this protein is Methionine--tRNA ligase.